We begin with the raw amino-acid sequence, 328 residues long: GTP 3',8-cyclase (328 aa).

The region spanning 1–229 (MNQVDYLRIS…DAQVRGAGPA (229 aa)) is the Radical SAM core domain. Arginine 8 is a binding site for GTP. Residues cysteine 15 and cysteine 19 each coordinate [4Fe-4S] cluster. Tyrosine 21 serves as a coordination point for S-adenosyl-L-methionine. Cysteine 22 is a binding site for [4Fe-4S] cluster. A GTP-binding site is contributed by arginine 60. Glycine 64 is an S-adenosyl-L-methionine binding site. Threonine 91 contacts GTP. S-adenosyl-L-methionine is bound at residue serine 115. Lysine 155 provides a ligand contact to GTP. Residue methionine 189 participates in S-adenosyl-L-methionine binding. Residues cysteine 252 and cysteine 255 each contribute to the [4Fe-4S] cluster site. 257–259 (RMR) contributes to the GTP binding site. Residue cysteine 269 coordinates [4Fe-4S] cluster.

Belongs to the radical SAM superfamily. MoaA family. In terms of assembly, monomer and homodimer. [4Fe-4S] cluster serves as cofactor.

The catalysed reaction is GTP + AH2 + S-adenosyl-L-methionine = (8S)-3',8-cyclo-7,8-dihydroguanosine 5'-triphosphate + 5'-deoxyadenosine + L-methionine + A + H(+). The protein operates within cofactor biosynthesis; molybdopterin biosynthesis. Functionally, catalyzes the cyclization of GTP to (8S)-3',8-cyclo-7,8-dihydroguanosine 5'-triphosphate. The protein is GTP 3',8-cyclase of Nostoc sp. (strain PCC 7120 / SAG 25.82 / UTEX 2576).